A 466-amino-acid chain; its full sequence is Replicative helicase loading/DNA remodeling protein DnaB (466 aa).

A DDBH1 region spans residues R3–Q113. The segment at E200 to E292 is DDBH2-1. Residues V293–N401 form a DDBH2-2 region.

This sequence belongs to the DnaB/DnaD family. In terms of assembly, homotetramer, higher-order oligomers are induced by ssDNA. The DNA replisome assembles sequentially on oriC in this order; DnaA, DnaD, DnaB, DnaI-DnaC helicase. Part of the replication restart primosome, PriA binds first, then DnaD and subsequently DnaB bind.

In terms of biological role, helps DnaI load the DnaC replicative helicase onto single-stranded (ss)DNA. During DNA replication from the origin of replication (oriC) in the DNA replisome, DnaB and DnaD are required after DnaA and before subsequent helicase DnaC loading. Component of the replication restart primosome, which reloads the replicative helicase on sites other than oriC. Essential for replication initiation of the chromosome and plasmids. Remodels DNA, laterally compacts supercoiled plasmid and linear DNA. Binds supercoiled, nicked and linear double-stranded (ds)DNA and phage phiX174 single-stranded (ss)DNA; phiX174 ssDNA is a better substrate than for B.subtilis. No binding to phage M13 ssDNA although it induces oligomers. This Staphylococcus aureus (strain NCTC 8325 / PS 47) protein is Replicative helicase loading/DNA remodeling protein DnaB.